Reading from the N-terminus, the 101-residue chain is Protein S100-A4 (101 aa).

Lys-7 bears the N6-acetyllysine mark. EF-hand domains follow at residues 12–47 (MVST…SFLG) and 50–85 (TDEA…VAMM). Positions 28 and 33 each coordinate Ca(2+). Lys-35 bears the N6-acetyllysine mark. Ca(2+)-binding residues include Asp-63, Asn-65, Asp-67, Glu-69, and Glu-74.

It belongs to the S-100 family. In terms of assembly, homodimer. Interacts with PPFIBP1 in a calcium-dependent mode. Interacts with PGLYRP1; this complex acts as a chemoattractant that promotes lymphocyte movement. Interacts with MYH9; this interaction increases cell motility. Interacts with Annexin 2/ANXA2. Interacts with TP53; this interaction promotes TP53 degradation. Interacts with CCR5 and CXCR3. Interacts with FCGR3A; this interaction inhibits PKC-dependent phosphorylation of FCGR3A.

It is found in the secreted. Its subcellular location is the nucleus. It localises to the cytoplasm. Its function is as follows. Calcium-binding protein that plays a role in various cellular processes including motility, angiogenesis, cell differentiation, apoptosis, and autophagy. Increases cell motility and invasiveness by interacting with non-muscle myosin heavy chain (NMMHC) IIA/MYH9. Mechanistically, promotes filament depolymerization and increases the amount of soluble myosin-IIA, resulting in the formation of stable protrusions facilitating chemotaxis. Also modulates the pro-apoptotic function of TP53 by binding to its C-terminal transactivation domain within the nucleus and reducing its protein levels. Within the extracellular space, stimulates cytokine production including granulocyte colony-stimulating factor and CCL24 from T-lymphocytes. In addition, stimulates T-lymphocyte chemotaxis by acting as a chemoattractant complex with PGLYRP1 that promotes lymphocyte migration via CCR5 and CXCR3 receptors. In Canis lupus familiaris (Dog), this protein is Protein S100-A4 (S100A4).